Here is a 232-residue protein sequence, read N- to C-terminus: Translation initiation factor IF-3 (232 aa).

Disordered stretches follow at residues 1–21 (MAIQ…RTNR) and 184–232 (LQSQ…AAQR). Residues 193-208 (AAAAAAPAAAPAAGAP) show a composition bias toward low complexity. Residues 209 to 222 (APTPAPAPAAPAPA) are compositionally biased toward pro residues. The segment covering 223-232 (PAAADPAAQR) has biased composition (low complexity).

The protein belongs to the IF-3 family. Monomer.

It localises to the cytoplasm. IF-3 binds to the 30S ribosomal subunit and shifts the equilibrium between 70S ribosomes and their 50S and 30S subunits in favor of the free subunits, thus enhancing the availability of 30S subunits on which protein synthesis initiation begins. The protein is Translation initiation factor IF-3 of Anaeromyxobacter sp. (strain K).